The chain runs to 842 residues: Elongation factor 2 (842 aa).

Residues 17 to 346 (TNVRNMSVIA…MIVMHLPSPV (330 aa)) form the tr-type G domain. GTP-binding positions include 26 to 33 (AHVDHGKS), 158 to 161 (NKVD), and 213 to 215 (SGL). Histidine 699 bears the Diphthamide mark.

The protein belongs to the TRAFAC class translation factor GTPase superfamily. Classic translation factor GTPase family. EF-G/EF-2 subfamily.

The protein localises to the cytoplasm. It catalyses the reaction GTP + H2O = GDP + phosphate + H(+). Its function is as follows. Catalyzes the GTP-dependent ribosomal translocation step during translation elongation. During this step, the ribosome changes from the pre-translocational (PRE) to the post-translocational (POST) state as the newly formed A-site-bound peptidyl-tRNA and P-site-bound deacylated tRNA move to the P and E sites, respectively. Catalyzes the coordinated movement of the two tRNA molecules, the mRNA and conformational changes in the ribosome. The protein is Elongation factor 2 (EFT1) of Candida glabrata (strain ATCC 2001 / BCRC 20586 / JCM 3761 / NBRC 0622 / NRRL Y-65 / CBS 138) (Yeast).